The sequence spans 294 residues: 2,4-diacetylphloroglucinol hydrolase (294 aa).

4 residues coordinate Zn(2+): His129, Glu160, His270, and Glu274.

Belongs to the DAPG/phloretin hydrolase family. In terms of assembly, homodimer. Zn(2+) serves as cofactor.

The enzyme catalyses 2,4-diacetylphloroglucinol + H2O = 2-acetylphloroglucinol + acetate. Its activity is regulated as follows. Specifically and significantly activated by CoCl(2). Competitively inhibited by MAPG, but not by 2-hydroxy- and 4-hydroxyacetophenone. Hydrolase that specifically degrades the potent antimicrobial compound 2,4-diacetylphloroglucinol (DAPG) to equimolar amounts of mildly toxic monoacetylphloroglucinol (MAPG) and acetate. The polypeptide is 2,4-diacetylphloroglucinol hydrolase (Pseudomonas sp).